A 147-amino-acid chain; its full sequence is Hemoglobin subunit gamma-1 (147 aa).

G2 is modified (N-acetylglycine). Residues 3 to 147 (HFTEEDKATI…VASALSSRYH (145 aa)) form the Globin domain. Phosphothreonine is present on T13. Residues S45, S51, and S53 each carry the phosphoserine modification. K60 carries the post-translational modification N6-acetyllysine. H64 is a heme b binding site. K83 carries the post-translational modification N6-acetyllysine. H93 contributes to the heme b binding site. Residue C94 is modified to S-nitrosocysteine. Position 140 is a phosphoserine (S140).

This sequence belongs to the globin family. In terms of assembly, heterotetramer of two alpha chains and two gamma chains in fetal hemoglobin (Hb F). In terms of tissue distribution, red blood cells.

Gamma chains make up the fetal hemoglobin F, in combination with alpha chains. This is Hemoglobin subunit gamma-1 (HBG1) from Pongo pygmaeus (Bornean orangutan).